A 316-amino-acid polypeptide reads, in one-letter code: tRNA dimethylallyltransferase (316 aa).

17 to 24 contacts ATP; sequence GPTASGKT. 19–24 provides a ligand contact to substrate; it reads TASGKT. Interaction with substrate tRNA regions lie at residues 42–45, 166–170, 247–252, and 280–287; these read DSAL, QRLSR, RCVGYR, and KRQITWLR.

It belongs to the IPP transferase family. In terms of assembly, monomer. Mg(2+) is required as a cofactor.

The catalysed reaction is adenosine(37) in tRNA + dimethylallyl diphosphate = N(6)-dimethylallyladenosine(37) in tRNA + diphosphate. Its function is as follows. Catalyzes the transfer of a dimethylallyl group onto the adenine at position 37 in tRNAs that read codons beginning with uridine, leading to the formation of N6-(dimethylallyl)adenosine (i(6)A). The polypeptide is tRNA dimethylallyltransferase (Escherichia coli O81 (strain ED1a)).